We begin with the raw amino-acid sequence, 354 residues long: Probable L-ascorbate-6-phosphate lactonase UlaG (354 aa).

Belongs to the UlaG family. A divalent metal cation serves as cofactor.

The protein localises to the cytoplasm. The enzyme catalyses L-ascorbate 6-phosphate + H2O = 3-dehydro-L-gulonate 6-phosphate. Its pathway is cofactor degradation; L-ascorbate degradation; D-xylulose 5-phosphate from L-ascorbate: step 1/4. Probably catalyzes the hydrolysis of L-ascorbate-6-P into 3-keto-L-gulonate-6-P. Is essential for L-ascorbate utilization under anaerobic conditions. In Salmonella agona (strain SL483), this protein is Probable L-ascorbate-6-phosphate lactonase UlaG.